Reading from the N-terminus, the 459-residue chain is Pentatricopeptide repeat-containing protein At1g07740, mitochondrial (459 aa).

Residues 1–20 (MRRRLSSVLINNQCIASQRH) constitute a mitochondrion transit peptide. Residues 19–41 (RHYHTSRPEKPTKKASSHEPTHK) form a disordered region. Residues 24-41 (SRPEKPTKKASSHEPTHK) show a composition bias toward basic and acidic residues. PPR repeat units lie at residues 80–114 (DYPS…NVRC), 115–149 (RESL…DCVR), 150–184 (TIQS…RLRP), 185–219 (NSVS…EVQP), 220–254 (SVVT…RIRP), 255–289 (NAVT…GCKP), 290–324 (GLVN…RIKP), 325–359 (DVVI…GCKP), 360–394 (NAAT…RHCP), and 395–429 (TPAT…NLSF).

This sequence belongs to the PPR family. P subfamily.

Its subcellular location is the mitochondrion. The polypeptide is Pentatricopeptide repeat-containing protein At1g07740, mitochondrial (Arabidopsis thaliana (Mouse-ear cress)).